Reading from the N-terminus, the 124-residue chain is MAITKDDILEAVGAMSVMELNDLVKAFEEKFGVSAAAMAVAAAPGAGGAAAAEEKTEFNVILAEVGSNKVGVIKAVREITGLGLKEAKDLVDGAPKPVKEGVDKATADDAKKKLEDAGAKVDVK.

This sequence belongs to the bacterial ribosomal protein bL12 family. Homodimer. Part of the ribosomal stalk of the 50S ribosomal subunit. Forms a multimeric L10(L12)X complex, where L10 forms an elongated spine to which 2 to 4 L12 dimers bind in a sequential fashion. Binds GTP-bound translation factors.

Its function is as follows. Forms part of the ribosomal stalk which helps the ribosome interact with GTP-bound translation factors. Is thus essential for accurate translation. In Cupriavidus metallidurans (strain ATCC 43123 / DSM 2839 / NBRC 102507 / CH34) (Ralstonia metallidurans), this protein is Large ribosomal subunit protein bL12.